Reading from the N-terminus, the 386-residue chain is SWI/SNF-related matrix-associated actin-dependent regulator of chromatin subfamily B member 1 (386 aa).

Residues 1-114 (MMMMALSKTF…DEKYKAVSIS (114 aa)) form a DNA-binding region.

The protein belongs to the SNF5 family. In terms of assembly, component of the multiprotein chromatin-remodeling complexes SWI/SNF. Component of neural progenitors-specific chromatin remodeling complex (npBAF complex) and the neuron-specific chromatin remodeling complex (nBAF complex). Component of the BAF (SWI/SNF) chromatin remodeling complex. Component of the SWI/SNF-B (PBAF) chromatin remodeling complex. Binds to double-stranded DNA.

The protein resides in the nucleus. Its function is as follows. Involved in chromatin-remodeling. Core component of the BAF (SWI/SNF) complex. This ATP-dependent chromatin-remodeling complex plays important roles in cell proliferation and differentiation, in cellular antiviral activities and inhibition of tumor formation. Belongs to the neural progenitors-specific chromatin remodeling complex (npBAF complex) and the neuron-specific chromatin remodeling complex (nBAF complex) and may play a role in neural development. The chain is SWI/SNF-related matrix-associated actin-dependent regulator of chromatin subfamily B member 1 (SMARCB1) from Gallus gallus (Chicken).